A 347-amino-acid polypeptide reads, in one-letter code: Protein RecA (347 aa).

67–74 contacts ATP; it reads GPESSGKT.

This sequence belongs to the RecA family.

The protein localises to the cytoplasm. In terms of biological role, can catalyze the hydrolysis of ATP in the presence of single-stranded DNA, the ATP-dependent uptake of single-stranded DNA by duplex DNA, and the ATP-dependent hybridization of homologous single-stranded DNAs. It interacts with LexA causing its activation and leading to its autocatalytic cleavage. In Helicobacter pylori (strain Shi470), this protein is Protein RecA.